The following is a 1086-amino-acid chain: Isoleucine--tRNA ligase (1086 aa).

A 'HIGH' region motif is present at residues 53-63 (PFANGLPHYGH). Residues 624–628 (KLSKR) carry the 'KMSKS' region motif. Lys-627 is a binding site for ATP.

Belongs to the class-I aminoacyl-tRNA synthetase family. IleS type 2 subfamily. Monomer. Zn(2+) is required as a cofactor.

The protein resides in the cytoplasm. The catalysed reaction is tRNA(Ile) + L-isoleucine + ATP = L-isoleucyl-tRNA(Ile) + AMP + diphosphate. Functionally, catalyzes the attachment of isoleucine to tRNA(Ile). As IleRS can inadvertently accommodate and process structurally similar amino acids such as valine, to avoid such errors it has two additional distinct tRNA(Ile)-dependent editing activities. One activity is designated as 'pretransfer' editing and involves the hydrolysis of activated Val-AMP. The other activity is designated 'posttransfer' editing and involves deacylation of mischarged Val-tRNA(Ile). In Rickettsia prowazekii (strain Madrid E), this protein is Isoleucine--tRNA ligase.